The following is a 617-amino-acid chain: Neurosecretory protein VGF (617 aa).

Residues 1-23 (MKTFTLPASVLFCFLLLIQGLGA) form the signal peptide. Disordered stretches follow at residues 29-75 (PDVF…GELF), 93-204 (RPAS…ESPG), and 239-262 (SESAPLPETHQFGEGVSSPKTHLG). Over residues 48–64 (AVSRPKDDGVPEVRAAR) the composition is skewed to basic and acidic residues. Residues 149-160 (DPEEDDRSEELE) are compositionally biased toward acidic residues. The segment covering 182–197 (ETAAAETETRTHTLTR) has biased composition (low complexity). Glutamine 313 carries the pyrrolidone carboxylic acid modification. The span at 345 to 364 (RQRDLGGRELQETQQERENE) shows a compositional bias: basic and acidic residues. Residues 345–599 (RQRDLGGREL…EEADAEERRL (255 aa)) are disordered. Residues 378-397 (EDDVGEEDEEAAEAEAEAEE) are compositionally biased toward acidic residues. A compositionally biased stretch (basic and acidic residues) spans 418 to 436 (AEDKRSQEEAPGHRRKDAE). The residue at position 423 (serine 423) is a Phosphoserine. Over residues 437–452 (GAEEGGEEDDDDEEMD) the composition is skewed to acidic residues. Positions 491 to 501 (PPEPVPPPRAA) are enriched in pro residues. Over residues 577 to 599 (HHPDLEAQARRAQEEADAEERRL) the composition is skewed to basic and acidic residues.

In terms of assembly, interacts with HSPA8 on cell membrane. Interacts with C3AR1. Interacts with C1QBP.

The protein resides in the secreted. Its subcellular location is the cytoplasmic vesicle. It localises to the secretory vesicle. Secreted polyprotein that is packaged and proteolytically processed by prohormone convertases PCSK1 and PCSK2 in a cell-type-specific manner. VGF and peptides derived from its processing play many roles in neurogenesis and neuroplasticity associated with learning, memory, depression and chronic pain. In terms of biological role, plays a role in the control of body fluid homeostasis by regulating vasopressin release. Suppresses presynaptic glutamatergic neurons connected to vasopressin neurons. Its function is as follows. Plays a role in the control of body fluid homeostasis by regulating vasopressin release. Activates GABAergic interneurons which are inhibitory neurons of the nervous system and thereby suppresses presynaptic glutamatergic neurons. Also stimulates feeding behavior in an orexin-dependent manner in the hypothalamus. Functions as a positive regulator for the activation of orexin neurons resulting in elevated gastric acid secretion and gastric emptying. Functionally, secreted multifunctional peptide that interacts with different receptors and thereby plays multiple physiological roles including modulation of energy expenditure, pain, response to stress, gastric regulation as well as lipolysis. Activates the G-protein-coupled receptor C3AR1 via a folding-upon-binding mechanism leading to enhanced lipolysis in adipocytes. Interacts with gC1qR receptor in macrophages and microglia causing increased levels of intracellular calcium and hypersensitivity. Plays a role in the regulation of memory formation and depression-related behaviors potentially by influencing synaptic plasticity and neurogenesis. Induces acute and transient activation of the NTRK2/TRKB receptor and subsequent CREB phosphorylation. Also induces insulin secretion in insulinoma cells by increasing intracellular calcium mobilization. The chain is Neurosecretory protein VGF from Mus musculus (Mouse).